Here is a 446-residue protein sequence, read N- to C-terminus: UDP-N-acetylmuramoylalanine--D-glutamate ligase (446 aa).

112–118 (GTNGKST) contacts ATP.

This sequence belongs to the MurCDEF family.

The protein resides in the cytoplasm. It carries out the reaction UDP-N-acetyl-alpha-D-muramoyl-L-alanine + D-glutamate + ATP = UDP-N-acetyl-alpha-D-muramoyl-L-alanyl-D-glutamate + ADP + phosphate + H(+). It functions in the pathway cell wall biogenesis; peptidoglycan biosynthesis. Functionally, cell wall formation. Catalyzes the addition of glutamate to the nucleotide precursor UDP-N-acetylmuramoyl-L-alanine (UMA). This chain is UDP-N-acetylmuramoylalanine--D-glutamate ligase, found in Baumannia cicadellinicola subsp. Homalodisca coagulata.